We begin with the raw amino-acid sequence, 598 residues long: UvrABC system protein C (598 aa).

The GIY-YIG domain occupies 13-91 (TLPGVYRMVD…IKGLKPRFNI (79 aa)). In terms of domain architecture, UVR spans 200–235 (TALTEEITAQMNAAAENLDFETAAYLRDRLRMLATV).

This sequence belongs to the UvrC family. In terms of assembly, interacts with UvrB in an incision complex.

The protein localises to the cytoplasm. Functionally, the UvrABC repair system catalyzes the recognition and processing of DNA lesions. UvrC both incises the 5' and 3' sides of the lesion. The N-terminal half is responsible for the 3' incision and the C-terminal half is responsible for the 5' incision. The sequence is that of UvrABC system protein C from Thiobacillus denitrificans (strain ATCC 25259 / T1).